The chain runs to 626 residues: Chaperone protein HtpG (626 aa).

The segment at 1 to 331 is a; substrate-binding; it reads MSETVERHEF…TDDLPLNVSR (331 aa). The interval 332–544 is b; the sequence is EMLQSTPTLQ…GMGPDLQMQR (213 aa). The interval 545 to 626 is c; sequence LLRRAGRGFG…GTAAKPAESA (82 aa).

The protein belongs to the heat shock protein 90 family. As to quaternary structure, homodimer.

The protein localises to the cytoplasm. Functionally, molecular chaperone. Has ATPase activity. In Methylorubrum extorquens (strain PA1) (Methylobacterium extorquens), this protein is Chaperone protein HtpG.